We begin with the raw amino-acid sequence, 1364 residues long: Pleckstrin homology domain-containing family H member 1 (1364 aa).

Residues 28–169 (FRLQASKIRE…VGSLQDALEA (142 aa)) adopt a coiled-coil conformation. Disordered stretches follow at residues 184–266 (GAAE…SPPH), 296–321 (GTKT…PGTP), 356–395 (LHPS…ESPK), 487–529 (PFMD…IKRG), and 546–568 (DACS…SSYS). A compositionally biased stretch (polar residues) spans 237 to 246 (EDSSSSTVHS). Basic and acidic residues predominate over residues 364–379 (LESRARSREEPEKMEM). Residues 509-520 (VPSSESRKTSGL) are compositionally biased toward polar residues. PH domains lie at 578–672 (SLEK…SLLK) and 687–796 (KPTV…VAAG). Phosphoserine is present on Ser745. The region spanning 832–986 (YSKDGLYASL…PSRMEVVSIL (155 aa)) is the MyTH4 domain. The FERM domain maps to 997 to 1333 (FSIPVHFTNG…NHCTTTVNPP (337 aa)).

The protein is Pleckstrin homology domain-containing family H member 1 (PLEKHH1) of Homo sapiens (Human).